A 360-amino-acid polypeptide reads, in one-letter code: Phospho-N-acetylmuramoyl-pentapeptide-transferase (360 aa).

The next 10 membrane-spanning stretches (helical) occupy residues 27–47 (GATATALFFVFFFGPRIIAAL), 74–94 (TMGGLMILSGLIVSTLLWANL), 99–119 (VWVVLFVTTGFGLIGFYDDYL), 135–155 (LLLEVGIAGAACYAMMLLGTP), 165–185 (INGFAVDLGLFFLVVGPFVIV), 199–219 (GLAIVPVMIAAGTFGVIAYLA), 236–256 (AGELSVVTGAVIGAGLGFLWF), 263–283 (IFMGDTGSLALGGLLGAVAVA), 288–308 (IVLAIVGGLFVLETLSVIVQV), and 337–357 (QVVVRFWIIAFVLALIGLSTL).

Belongs to the glycosyltransferase 4 family. MraY subfamily. The cofactor is Mg(2+).

Its subcellular location is the cell inner membrane. The enzyme catalyses UDP-N-acetyl-alpha-D-muramoyl-L-alanyl-gamma-D-glutamyl-meso-2,6-diaminopimeloyl-D-alanyl-D-alanine + di-trans,octa-cis-undecaprenyl phosphate = di-trans,octa-cis-undecaprenyl diphospho-N-acetyl-alpha-D-muramoyl-L-alanyl-D-glutamyl-meso-2,6-diaminopimeloyl-D-alanyl-D-alanine + UMP. Its pathway is cell wall biogenesis; peptidoglycan biosynthesis. In terms of biological role, catalyzes the initial step of the lipid cycle reactions in the biosynthesis of the cell wall peptidoglycan: transfers peptidoglycan precursor phospho-MurNAc-pentapeptide from UDP-MurNAc-pentapeptide onto the lipid carrier undecaprenyl phosphate, yielding undecaprenyl-pyrophosphoryl-MurNAc-pentapeptide, known as lipid I. This is Phospho-N-acetylmuramoyl-pentapeptide-transferase from Methylocella silvestris (strain DSM 15510 / CIP 108128 / LMG 27833 / NCIMB 13906 / BL2).